The chain runs to 345 residues: N-acetyl-gamma-glutamyl-phosphate reductase (345 aa).

Residue Cys149 is part of the active site.

Belongs to the NAGSA dehydrogenase family. Type 1 subfamily.

Its subcellular location is the cytoplasm. The catalysed reaction is N-acetyl-L-glutamate 5-semialdehyde + phosphate + NADP(+) = N-acetyl-L-glutamyl 5-phosphate + NADPH + H(+). It participates in amino-acid biosynthesis; L-arginine biosynthesis; N(2)-acetyl-L-ornithine from L-glutamate: step 3/4. In terms of biological role, catalyzes the NADPH-dependent reduction of N-acetyl-5-glutamyl phosphate to yield N-acetyl-L-glutamate 5-semialdehyde. The polypeptide is N-acetyl-gamma-glutamyl-phosphate reductase (Halalkalibacterium halodurans (strain ATCC BAA-125 / DSM 18197 / FERM 7344 / JCM 9153 / C-125) (Bacillus halodurans)).